Reading from the N-terminus, the 369-residue chain is Endophilin-A (369 aa).

The 231-residue stretch at 18–248 (TEKMGGAEGT…LQEKRAEAES (231 aa)) folds into the BAR domain. A coiled-coil region spans residues 227 to 249 (QCADVLRGLQETLQEKRAEAESR). Residues 275–294 (GTPSHISSSASPLPSPMRSP) are compositionally biased toward low complexity. The tract at residues 275-297 (GTPSHISSSASPLPSPMRSPAKS) is disordered. In terms of domain architecture, SH3 spans 305-364 (QQQPCCQALYDFDPENPGELGFKENDIITLLNRVDDNWYEGAVNGRTGYFPQSYVQVQVP).

This sequence belongs to the endophilin family.

The protein localises to the cytoplasm. It localises to the membrane. In terms of biological role, required presynaptically at the neuromuscular junction. Implicated in synaptic vesicle endocytosis. The sequence is that of Endophilin-A from Drosophila virilis (Fruit fly).